A 391-amino-acid polypeptide reads, in one-letter code: Putative gustatory receptor 36b (391 aa).

The Cytoplasmic segment spans residues 1–4 (MVDW). Residues 5–25 (VVLLLKAVHIYCYLIGLSNFE) traverse the membrane as a helical segment. Residues 26–39 (FDCRTGRVFKSRRC) are Extracellular-facing. The chain crosses the membrane as a helical span at residues 40–60 (TIYAFMANIFILITIIYNFTA). At 61-74 (HGDTNLLFQSANKL) the chain is on the cytoplasmic side. Residues 75 to 95 (HEYVIIIMSGLKIVAGLITVL) form a helical membrane-spanning segment. At 96–127 (NRWLQRGQMMQLVKDVIRLYMINPQLKSMIRW) the chain is on the extracellular side. Residues 128 to 148 (GILLKAFISFAIELLQVTLSV) traverse the membrane as a helical segment. The Cytoplasmic portion of the chain corresponds to 149–165 (DALDRQGTAEMMGLLVK). Residues 166 to 186 (LCVSFIMNLAISQHFLVILLI) form a helical membrane-spanning segment. Topologically, residues 187-284 (RAQYRIMNAK…YKYGPHNLKL (98 aa)) are extracellular. A helical transmembrane segment spans residues 285–305 (SAKTSIIVCILITLFYLDALV). At 306–363 (NCNNMLRVLDHHKDFLGLLEERTVFASSLDIRLEESFESLQLQLARNPLKINVMGMFP) the chain is on the cytoplasmic side. Residues 364 to 384 (ITRGSTAAMCASVIVNSIFLI) traverse the membrane as a helical segment. The Extracellular portion of the chain corresponds to 385-391 (QFDMEFF).

This sequence belongs to the insect chemoreceptor superfamily. Gustatory receptor (GR) family. Gr22e subfamily. In terms of tissue distribution, expressed in neurons of the terminal external chemosensory organ of larvae.

It localises to the cell membrane. Its function is as follows. Probable gustatory receptor which mediates acceptance or avoidance behavior, depending on its substrates. The polypeptide is Putative gustatory receptor 36b (Gr36b) (Drosophila melanogaster (Fruit fly)).